The following is a 270-amino-acid chain: uncharacterized protein (270 aa).

Belongs to the GSP E family.

This is an uncharacterized protein from Methanocaldococcus jannaschii (strain ATCC 43067 / DSM 2661 / JAL-1 / JCM 10045 / NBRC 100440) (Methanococcus jannaschii).